The following is a 185-amino-acid chain: Probable NEDD8-conjugating enzyme Ubc12-like (185 aa).

The disordered stretch occupies residues 8 to 29 (KEKQREESQSNNGRGASTVKKQ). Over residues 16–28 (QSNNGRGASTVKK) the composition is skewed to polar residues. Residues 31-176 (AGELRLHKDI…VRRAMMGGQV (146 aa)) form the UBC core domain. C114 serves as the catalytic Glycyl thioester intermediate.

It belongs to the ubiquitin-conjugating enzyme family. UBC12 subfamily.

It functions in the pathway protein modification; protein neddylation. Its function is as follows. Accepts the ubiquitin-like protein NEDD8/RUB1 from the ECR1-AXR1 E1 complex and catalyzes its covalent attachment to other proteins. This is Probable NEDD8-conjugating enzyme Ubc12-like (RCE2) from Arabidopsis thaliana (Mouse-ear cress).